We begin with the raw amino-acid sequence, 201 residues long: Recombination protein RecR (201 aa).

Residues 56-71 (CKICFNVSSDEVCQYC) form a C4-type zinc finger. Residues 79–174 (SMICVVEESK…TVSRLASGLP (96 aa)) form the Toprim domain.

It belongs to the RecR family.

Functionally, may play a role in DNA repair. It seems to be involved in an RecBC-independent recombinational process of DNA repair. It may act with RecF and RecO. The chain is Recombination protein RecR from Cutibacterium acnes (strain DSM 16379 / KPA171202) (Propionibacterium acnes).